Consider the following 433-residue polypeptide: Beta-agarase AgaA (433 aa).

A signal peptide spans 1–20 (MRKITSILLTCVMGCTATYA). The 275-residue stretch at 21 to 295 (ADWDGVPVPA…WVRFYKPVPI (275 aa)) folds into the GH16 domain. The active-site Nucleophile is Glu-147. Catalysis depends on Glu-152, which acts as the Proton donor. Positions 300–431 (TTVELGNFHN…QWNGDEIRFV (132 aa)) constitute a CBM6 domain.

It belongs to the glycosyl hydrolase 16 family. As to quaternary structure, monomer.

The protein resides in the periplasm. The enzyme catalyses Hydrolysis of (1-&gt;4)-beta-D-galactosidic linkages in agarose, giving the tetramer as the predominant product.. Activity is abolished by Hg(2+), Cu(2+), Pb(2+) and Zn(2+) ions, but is not affected by NaCl up to at least 1.0 M, Mg(2+), K(+) and Ca(2+). Not affected by iodoacetamide, p-chloromercuribenzoate, dithiothreitol, 2-mercaptoethanol, EDTA and sodium dodecyl sulfate. Inhibited by N-bromosuccinimide. Its function is as follows. Endo-type beta-agarase, which produces neoagarotetraose (NA4) as the main final product, with a small amount of neoagarohexaose (NA6) and neoagarobiose (NA2). This chain is Beta-agarase AgaA, found in Microbulbifer thermotolerans.